The chain runs to 187 residues: dCTP deaminase (187 aa).

DCTP is bound by residues lysine 110–arginine 115, threonine 134–glutamate 136, glutamine 155, tyrosine 169, and glutamine 179. Residue glutamate 136 is the Proton donor/acceptor of the active site.

This sequence belongs to the dCTP deaminase family. Homotrimer.

It carries out the reaction dCTP + H2O + H(+) = dUTP + NH4(+). It participates in pyrimidine metabolism; dUMP biosynthesis; dUMP from dCTP (dUTP route): step 1/2. Functionally, catalyzes the deamination of dCTP to dUTP. This chain is dCTP deaminase, found in Bordetella pertussis (strain Tohama I / ATCC BAA-589 / NCTC 13251).